Consider the following 698-residue polypeptide: Elongation factor G (698 aa).

The tr-type G domain occupies alanine 8–leucine 284. GTP-binding positions include alanine 17 to threonine 24, aspartate 81 to histidine 85, and asparagine 135 to aspartate 138. The interval isoleucine 289–proline 309 is disordered.

The protein belongs to the TRAFAC class translation factor GTPase superfamily. Classic translation factor GTPase family. EF-G/EF-2 subfamily.

The protein resides in the cytoplasm. In terms of biological role, catalyzes the GTP-dependent ribosomal translocation step during translation elongation. During this step, the ribosome changes from the pre-translocational (PRE) to the post-translocational (POST) state as the newly formed A-site-bound peptidyl-tRNA and P-site-bound deacylated tRNA move to the P and E sites, respectively. Catalyzes the coordinated movement of the two tRNA molecules, the mRNA and conformational changes in the ribosome. The chain is Elongation factor G from Salinispora arenicola (strain CNS-205).